A 143-amino-acid chain; its full sequence is Hemoglobin subunit alpha-2 (143 aa).

At serine 2 the chain carries N-acetylserine. The Globin domain maps to 2–143 (SLSAKDKATV…LALALSEKYR (142 aa)). An O2-binding site is contributed by histidine 60. Histidine 89 provides a ligand contact to heme b.

This sequence belongs to the globin family. As to quaternary structure, hb 2 is a heterotetramer of two alpha-2 and two beta-1 chains. Hb 3 is a heterotetramer of two alpha-2 and two beta-2 chains. Red blood cells.

Involved in oxygen transport from gills to the various peripheral tissues. This Boreogadus saida (Polar cod) protein is Hemoglobin subunit alpha-2 (hba2).